We begin with the raw amino-acid sequence, 159 residues long: Putative 4-hydroxy-4-methyl-2-oxoglutarate aldolase (159 aa).

Residues 75–78 (GDQL) and Arg97 contribute to the substrate site. Asp98 lines the a divalent metal cation pocket.

The protein belongs to the class II aldolase/RraA-like family. Homotrimer. The cofactor is a divalent metal cation.

It carries out the reaction 4-hydroxy-4-methyl-2-oxoglutarate = 2 pyruvate. It catalyses the reaction oxaloacetate + H(+) = pyruvate + CO2. Its function is as follows. Catalyzes the aldol cleavage of 4-hydroxy-4-methyl-2-oxoglutarate (HMG) into 2 molecules of pyruvate. Also contains a secondary oxaloacetate (OAA) decarboxylase activity due to the common pyruvate enolate transition state formed following C-C bond cleavage in the retro-aldol and decarboxylation reactions. The protein is Putative 4-hydroxy-4-methyl-2-oxoglutarate aldolase of Laribacter hongkongensis (strain HLHK9).